A 229-amino-acid chain; its full sequence is ATP-dependent Clp protease proteolytic subunit 1 (229 aa).

The Nucleophile role is filled by Ser129. His154 is an active-site residue.

Belongs to the peptidase S14 family. In terms of assembly, fourteen ClpP subunits assemble into 2 heptameric rings which stack back to back to give a disk-like structure with a central cavity, resembling the structure of eukaryotic proteasomes.

Its subcellular location is the cytoplasm. The enzyme catalyses Hydrolysis of proteins to small peptides in the presence of ATP and magnesium. alpha-casein is the usual test substrate. In the absence of ATP, only oligopeptides shorter than five residues are hydrolyzed (such as succinyl-Leu-Tyr-|-NHMec, and Leu-Tyr-Leu-|-Tyr-Trp, in which cleavage of the -Tyr-|-Leu- and -Tyr-|-Trp bonds also occurs).. In terms of biological role, cleaves peptides in various proteins in a process that requires ATP hydrolysis. Has a chymotrypsin-like activity. Plays a major role in the degradation of misfolded proteins. The polypeptide is ATP-dependent Clp protease proteolytic subunit 1 (Thermosynechococcus vestitus (strain NIES-2133 / IAM M-273 / BP-1)).